Here is a 403-residue protein sequence, read N- to C-terminus: Exodeoxyribonuclease 7 large subunit (403 aa).

It belongs to the XseA family. In terms of assembly, heterooligomer composed of large and small subunits.

It localises to the cytoplasm. It carries out the reaction Exonucleolytic cleavage in either 5'- to 3'- or 3'- to 5'-direction to yield nucleoside 5'-phosphates.. Bidirectionally degrades single-stranded DNA into large acid-insoluble oligonucleotides, which are then degraded further into small acid-soluble oligonucleotides. The protein is Exodeoxyribonuclease 7 large subunit of Clostridium botulinum (strain Okra / Type B1).